Reading from the N-terminus, the 208-residue chain is Small ribosomal subunit protein uS4 (208 aa).

Positions 98 to 158 (RRLDNVVYRL…EKSRGQLRIK (61 aa)) constitute an S4 RNA-binding domain.

The protein belongs to the universal ribosomal protein uS4 family. As to quaternary structure, part of the 30S ribosomal subunit. Contacts protein S5. The interaction surface between S4 and S5 is involved in control of translational fidelity.

One of the primary rRNA binding proteins, it binds directly to 16S rRNA where it nucleates assembly of the body of the 30S subunit. Its function is as follows. With S5 and S12 plays an important role in translational accuracy. This is Small ribosomal subunit protein uS4 from Magnetococcus marinus (strain ATCC BAA-1437 / JCM 17883 / MC-1).